The chain runs to 629 residues: tRNA uridine 5-carboxymethylaminomethyl modification enzyme MnmG (629 aa).

FAD-binding positions include 13 to 18 (GGGHAG), valine 125, and serine 180. 273 to 287 (GPRYCPSIEDKVMRF) lines the NAD(+) pocket. Glutamine 370 is a binding site for FAD.

This sequence belongs to the MnmG family. As to quaternary structure, homodimer. Heterotetramer of two MnmE and two MnmG subunits. Requires FAD as cofactor.

Its subcellular location is the cytoplasm. Functionally, NAD-binding protein involved in the addition of a carboxymethylaminomethyl (cmnm) group at the wobble position (U34) of certain tRNAs, forming tRNA-cmnm(5)s(2)U34. In Salmonella paratyphi A (strain ATCC 9150 / SARB42), this protein is tRNA uridine 5-carboxymethylaminomethyl modification enzyme MnmG.